Reading from the N-terminus, the 87-residue chain is MPPNDRAEKQAAAQQAVNILHEISTILNCHLDRQTLSICISMIEKGINPEALANVVKELRKKGQENQLEAAAAAAASSSTTVPSRRR.

Belongs to the MOZART1 family. Part of the gamma-tubulin complex.

The protein resides in the cytoplasm. The protein localises to the cytoskeleton. Its subcellular location is the microtubule organizing center. It localises to the spindle pole body. Functionally, required for gamma-tubulin complex recruitment to the microtubule organizing center (MTOC). This is Mitotic-spindle organizing protein 1 from Chaetomium globosum (strain ATCC 6205 / CBS 148.51 / DSM 1962 / NBRC 6347 / NRRL 1970) (Soil fungus).